Here is a 249-residue protein sequence, read N- to C-terminus: tRNA (guanine-N(1)-)-methyltransferase (249 aa).

S-adenosyl-L-methionine-binding positions include glycine 113 and 133–138; that span reads IGDFVV.

Belongs to the RNA methyltransferase TrmD family. As to quaternary structure, homodimer.

Its subcellular location is the cytoplasm. The enzyme catalyses guanosine(37) in tRNA + S-adenosyl-L-methionine = N(1)-methylguanosine(37) in tRNA + S-adenosyl-L-homocysteine + H(+). In terms of biological role, specifically methylates guanosine-37 in various tRNAs. The protein is tRNA (guanine-N(1)-)-methyltransferase of Neisseria gonorrhoeae (strain ATCC 700825 / FA 1090).